We begin with the raw amino-acid sequence, 1101 residues long: Isoleucine--tRNA ligase (1101 aa).

A 'HIGH' region motif is present at residues 50–60 (PFANGLPHYGH). The short motif at 629–633 (KLSKR) is the 'KMSKS' region element. Lys-632 is an ATP binding site.

The protein belongs to the class-I aminoacyl-tRNA synthetase family. IleS type 2 subfamily. In terms of assembly, monomer. The cofactor is Zn(2+).

Its subcellular location is the cytoplasm. It carries out the reaction tRNA(Ile) + L-isoleucine + ATP = L-isoleucyl-tRNA(Ile) + AMP + diphosphate. Catalyzes the attachment of isoleucine to tRNA(Ile). As IleRS can inadvertently accommodate and process structurally similar amino acids such as valine, to avoid such errors it has two additional distinct tRNA(Ile)-dependent editing activities. One activity is designated as 'pretransfer' editing and involves the hydrolysis of activated Val-AMP. The other activity is designated 'posttransfer' editing and involves deacylation of mischarged Val-tRNA(Ile). This is Isoleucine--tRNA ligase from Anaplasma marginale (strain St. Maries).